The sequence spans 152 residues: Protein-export protein SecB (152 aa).

The protein belongs to the SecB family. Homotetramer, a dimer of dimers. One homotetramer interacts with 1 SecA dimer.

Its subcellular location is the cytoplasm. Functionally, one of the proteins required for the normal export of preproteins out of the cell cytoplasm. It is a molecular chaperone that binds to a subset of precursor proteins, maintaining them in a translocation-competent state. It also specifically binds to its receptor SecA. This Rickettsia rickettsii (strain Iowa) protein is Protein-export protein SecB.